Reading from the N-terminus, the 432-residue chain is 2-oxoglutarate-dependent dioxygenase AOP2 (432 aa).

Residues 281-378 (SGDDVEANDD…RYTAAIFTCP (98 aa)) enclose the Fe2OG dioxygenase domain. Residues His301, Asp303, and His358 each contribute to the Fe cation site. Arg369 serves as a coordination point for 2-oxoglutarate.

This sequence belongs to the iron/ascorbate-dependent oxidoreductase family. Fe(2+) serves as cofactor.

Functionally, 2-oxoglutarate-dependent dioxygenase involved in glucosinolates biosynthesis. Catalyzes the conversion of methylsulfinylalkyl glucosinolates to alkenyl glucosinolates. The protein is 2-oxoglutarate-dependent dioxygenase AOP2 (AOP2) of Arabidopsis thaliana (Mouse-ear cress).